The primary structure comprises 1427 residues: Protein expanded (1427 aa).

The FERM domain maps to 26-399 (RFLALRLLGQ…DTHQWSMKLA (374 aa)). Residues 176–212 (GDAPPGTSNSKDDSGEETSASPSNGGRGLSATTTLPK) are disordered. Positions 192–211 (ETSASPSNGGRGLSATTTLP) are enriched in polar residues. Phosphotyrosine is present on residues Tyr227 and Tyr423. Disordered stretches follow at residues 520–566 (VRPQ…IGSQ) and 611–656 (NSAL…SGVY). Residues 524–544 (DASSNGATIVTNSSVQRNSMG) are compositionally biased toward polar residues. Residues 545 to 559 (TTANDSSTATDSPSS) are compositionally biased toward low complexity. Residue Tyr679 is modified to Phosphotyrosine. Positions 688 to 710 (EETHVQHSDSVDGKKKEDFRPRS) are enriched in basic and acidic residues. 5 disordered regions span residues 688-732 (EETH…DNKH), 766-792 (YVTL…YSAR), 815-880 (APKP…SLKS), 939-963 (HNSN…HRHS), and 1000-1022 (LAPP…HPHL). Tyr766 carries the phosphotyrosine modification. Positions 818-838 (PDSPPCSPPVPPAPIPAPPPA) are enriched in pro residues. Positions 842-847 (RDPPPY) match the RXPPXY motif motif. Over residues 848–859 (SISSKPRPTSLI) the composition is skewed to polar residues. A compositionally biased stretch (low complexity) spans 860–877 (SVSSSAHPAPSAAGSMSS). The segment covering 951 to 963 (LHHHHVPSHHRHS) has biased composition (basic residues). A compositionally biased stretch (pro residues) spans 1001–1019 (APPPPSLPRQPPPPPPPNH). The SH3-binding signature appears at 1008–1020 (PRQPPPPPPPNHP). Tyr1103 carries the phosphotyrosine modification. Positions 1149–1157 (PPPPPPLHP) match the SH3-binding motif. Position 1181 is a phosphoserine (Ser1181). 2 disordered regions span residues 1190 to 1267 (DLLP…WAGE) and 1345 to 1398 (TGQE…LPVQ). Composition is skewed to pro residues over residues 1214-1230 (PPMP…PSKP) and 1237-1246 (PIPPRKPPTL). 2 stretches are compositionally biased toward polar residues: residues 1253-1262 (SPLTKTSSGA) and 1345-1370 (TGQE…SSAG). Positions 1376 to 1388 (KARKGSTVSHRHP) are enriched in basic residues.

Forms a complex with Kibra and Mer. Interacts (via RXPPXY motif) with Kibra (via domain WW 1). Interacts with Mer and Hpo (via SARAH domain). Interacts with Schip1; the interaction results in recruitment of Schip1 to the apical cell membrane. Interacts with ack and yki. In terms of processing, phosphorylated by Ack at several tyrosines including Tyr-227, Tyr-423, Tyr-679, Tyr-766 and Tyr-1103.

The protein resides in the apical cell membrane. Activates the Hippo/SWH (Sav/Wts/Hpo) signaling pathway, a signaling pathway that plays a pivotal role in organ size control and tumor suppression by restricting proliferation and promoting apoptosis. The core of this pathway is composed of a kinase cascade wherein Hippo (Hpo), in complex with its regulatory protein Salvador (Sav), phosphorylates and activates Warts (Wts) in complex with its regulatory protein Mats, which in turn phosphorylates and inactivates the Yorkie (Yki) oncoprotein. Ex acts synergistically along with Mer and Kibra to regulate the Hippo signaling pathway. Involved in the control of cell proliferation in imaginal disks. May bind to certain proteins of signal transduction pathways by interaction with their SH3 domains. Required for apical localization of Schip1. The protein is Protein expanded (ex) of Drosophila melanogaster (Fruit fly).